Here is a 163-residue protein sequence, read N- to C-terminus: Nucleotide-binding protein BCG9842_B4128 (163 aa).

This sequence belongs to the YajQ family.

Functionally, nucleotide-binding protein. The polypeptide is Nucleotide-binding protein BCG9842_B4128 (Bacillus cereus (strain G9842)).